Reading from the N-terminus, the 346-residue chain is Secreted frizzled-related protein 4 (346 aa).

The signal sequence occupies residues 1-18 (MFLSILVALCLWLHLALG). The FZ domain maps to 19–139 (VRGAPCEAVR…VYDRGVCISP (121 aa)). 5 disulfides stabilise this stretch: Cys-24–Cys-85, Cys-32–Cys-78, Cys-69–Cys-108, Cys-97–Cys-136, and Cys-101–Cys-125. 2 N-linked (GlcNAc...) asparagine glycosylation sites follow: Asn-38 and Asn-68. Asn-116, Asn-194, and Asn-240 each carry an N-linked (GlcNAc...) asparagine glycan. Positions 178-307 (CKCKKVKPTL…IQDKKKTAGR (130 aa)) constitute an NTR domain. Basic and acidic residues predominate over residues 294-303 (QRRTIQDKKK). A disordered region spans residues 294-346 (QRRTIQDKKKTAGRTSRSNPPKPKGKPPAPKPASPKKNIKTRSAQKKTNPKKV). A compositionally biased stretch (pro residues) spans 313–326 (PPKPKGKPPAPKPA). The segment covering 330 to 346 (KNIKTRSAQKKTNPKKV) has biased composition (basic residues).

Belongs to the secreted frizzled-related protein (sFRP) family.

It localises to the secreted. Functionally, soluble frizzled-related proteins (sFRPS) function as modulators of Wnt signaling through direct interaction with Wnts. They have a role in regulating cell growth and differentiation in specific cell types. SFRP4 plays a role in bone morphogenesis. May also act as a regulator of adult uterine morphology and function. May also increase apoptosis during ovulation possibly through modulation of FZ1/FZ4/WNT4 signaling. Has phosphaturic effects by specifically inhibiting sodium-dependent phosphate uptake. This Macaca mulatta (Rhesus macaque) protein is Secreted frizzled-related protein 4 (SFRP4).